A 119-amino-acid chain; its full sequence is Large ribosomal subunit protein bL20 (119 aa).

It belongs to the bacterial ribosomal protein bL20 family.

Functionally, binds directly to 23S ribosomal RNA and is necessary for the in vitro assembly process of the 50S ribosomal subunit. It is not involved in the protein synthesizing functions of that subunit. The sequence is that of Large ribosomal subunit protein bL20 from Streptococcus gordonii (strain Challis / ATCC 35105 / BCRC 15272 / CH1 / DL1 / V288).